The chain runs to 506 residues: Arabinose import ATP-binding protein AraG (506 aa).

ABC transporter domains lie at 10–245 (LEFC…MVGR) and 253–501 (YRSR…MLGN). 42 to 49 (GENGAGKS) contributes to the ATP binding site.

It belongs to the ABC transporter superfamily. Arabinose importer (TC 3.A.1.2.2) family. In terms of assembly, the complex is composed of two ATP-binding proteins (AraG), two transmembrane proteins (AraH) and a solute-binding protein (AraF).

Its subcellular location is the cell inner membrane. It carries out the reaction L-arabinose(out) + ATP + H2O = L-arabinose(in) + ADP + phosphate + H(+). Functionally, part of the ABC transporter complex AraFGH involved in arabinose import. Responsible for energy coupling to the transport system. The sequence is that of Arabinose import ATP-binding protein AraG from Vibrio parahaemolyticus serotype O3:K6 (strain RIMD 2210633).